The primary structure comprises 66 residues: Toxin Boma6c (66 aa).

The region spanning 2 to 64 (RDAYIAQNYN…VPIRIPGKCH (63 aa)) is the LCN-type CS-alpha/beta domain. 4 disulfides stabilise this stretch: Cys12–Cys63, Cys16–Cys36, Cys22–Cys46, and Cys26–Cys48.

It belongs to the long (4 C-C) scorpion toxin superfamily. Sodium channel inhibitor family. Alpha subfamily. As to expression, expressed by the venom gland.

Its subcellular location is the secreted. Alpha toxins bind voltage-independently at site-3 of sodium channels (Nav) and inhibit the inactivation of the activated channels, thereby blocking neuronal transmission. The sequence is that of Toxin Boma6c from Buthus occitanus mardochei (Moroccan scorpion).